The chain runs to 396 residues: Putative F-box/kelch-repeat protein At3g17540 (396 aa).

One can recognise an F-box domain in the interval 4-50 (TMVISDLPHEIESEILSRVPTKSLAKLHTTCKRWYALFRDPRFVKKN). 3 Kelch repeats span residues 163 to 209 (LRYC…GMSL), 253 to 299 (VLSI…FLAV), and 338 to 386 (RIYI…KRKG).

This chain is Putative F-box/kelch-repeat protein At3g17540, found in Arabidopsis thaliana (Mouse-ear cress).